We begin with the raw amino-acid sequence, 1505 residues long: G patch domain-containing protein 8 (1505 aa).

Residues S40 to M86 enclose the G-patch domain. The stretch at D89–A124 forms a coiled coil. The C2H2-type zinc finger occupies F136–H160. 2 stretches are compositionally biased toward basic and acidic residues: residues L166–A175 and S182–A206. Residues L166–V244 are disordered. Positions V223–D233 are enriched in acidic residues. Residue K311 forms a Glycyl lysine isopeptide (Lys-Gly) (interchain with G-Cter in SUMO2) linkage. 2 stretches are compositionally biased toward basic and acidic residues: residues H322–S339 and E421–K436. Disordered regions lie at residues H322 to Y393 and Q419 to L537. Residues S437–A449 show a composition bias toward polar residues. At K479 the chain carries N6-acetyllysine. K573 is covalently cross-linked (Glycyl lysine isopeptide (Lys-Gly) (interchain with G-Cter in SUMO2)). Composition is skewed to basic and acidic residues over residues S575–E612 and S648–G665. A disordered region spans residues S575–S1304. The residue at position 648 (S648) is a Phosphoserine. Basic residues predominate over residues K666–K687. The span at A688–K702 shows a compositional bias: basic and acidic residues. Residues S703–K715 show a composition bias toward basic residues. 3 positions are modified to phosphoserine: S733, S735, and S753. Positions A745–G767 are enriched in basic and acidic residues. The span at A794–H804 shows a compositional bias: basic residues. The span at S832–S849 shows a compositional bias: acidic residues. Positions S856 to R871 are enriched in basic residues. Over residues R872–D900 the composition is skewed to low complexity. Phosphoserine occurs at positions 915 and 918. A compositionally biased stretch (basic residues) spans S923–Y932. A phosphoserine mark is found at S985, S1013, S1018, S1037, and S1039. Residues E1017 to R1031 show a composition bias toward basic and acidic residues. The span at G1050–K1063 shows a compositional bias: basic and acidic residues. S1085 bears the Phosphoserine mark. 3 stretches are compositionally biased toward basic and acidic residues: residues L1097–V1112, K1163–S1185, and E1211–A1220. K1109 participates in a covalent cross-link: Glycyl lysine isopeptide (Lys-Gly) (interchain with G-Cter in SUMO2). S1179 is modified (phosphoserine).

This Mus musculus (Mouse) protein is G patch domain-containing protein 8 (Gpatch8).